The chain runs to 150 residues: Probable antibacterial peptide (150 aa).

A signal peptide spans 1–19 (MHIARFCLLSSMAVLALSA).

Its subcellular location is the secreted. In terms of biological role, has antibacterial activity in vitro. The sequence is that of Probable antibacterial peptide from Riptortus clavatus (Bean bug).